We begin with the raw amino-acid sequence, 263 residues long: Phosphatidylglycerol--prolipoprotein diacylglyceryl transferase (263 aa).

The next 4 helical transmembrane spans lie at Val-10–Phe-30, Met-56–Tyr-76, Ile-91–Leu-111, and Gly-117–Phe-137. An a 1,2-diacyl-sn-glycero-3-phospho-(1'-sn-glycerol)-binding site is contributed by Arg-139. A run of 3 helical transmembrane segments spans residues Pro-171 to Phe-191, Gly-199 to Val-219, and Phe-231 to Leu-251.

This sequence belongs to the Lgt family.

Its subcellular location is the cell inner membrane. The enzyme catalyses L-cysteinyl-[prolipoprotein] + a 1,2-diacyl-sn-glycero-3-phospho-(1'-sn-glycerol) = an S-1,2-diacyl-sn-glyceryl-L-cysteinyl-[prolipoprotein] + sn-glycerol 1-phosphate + H(+). Its pathway is protein modification; lipoprotein biosynthesis (diacylglyceryl transfer). Functionally, catalyzes the transfer of the diacylglyceryl group from phosphatidylglycerol to the sulfhydryl group of the N-terminal cysteine of a prolipoprotein, the first step in the formation of mature lipoproteins. This Nitratidesulfovibrio vulgaris (strain ATCC 29579 / DSM 644 / CCUG 34227 / NCIMB 8303 / VKM B-1760 / Hildenborough) (Desulfovibrio vulgaris) protein is Phosphatidylglycerol--prolipoprotein diacylglyceryl transferase.